The chain runs to 310 residues: Tagatose-6-phosphate kinase (310 aa).

The protein belongs to the carbohydrate kinase PfkB family. LacC subfamily.

It catalyses the reaction D-tagatofuranose 6-phosphate + ATP = D-tagatofuranose 1,6-bisphosphate + ADP + H(+). It participates in carbohydrate metabolism; D-tagatose 6-phosphate degradation; D-glyceraldehyde 3-phosphate and glycerone phosphate from D-tagatose 6-phosphate: step 1/2. This is Tagatose-6-phosphate kinase from Streptococcus mutans serotype c (strain ATCC 700610 / UA159).